Consider the following 61-residue polypeptide: Photosystem II reaction center protein K (61 aa).

A propeptide spanning residues 1–24 (MLNIFNLICICFNSALFSSTFLVA) is cleaved from the precursor. Residues 40–60 (MPVIPLFFLLLAFVWQAAVSF) form a helical membrane-spanning segment.

This sequence belongs to the PsbK family. PSII is composed of 1 copy each of membrane proteins PsbA, PsbB, PsbC, PsbD, PsbE, PsbF, PsbH, PsbI, PsbJ, PsbK, PsbL, PsbM, PsbT, PsbX, PsbY, PsbZ, Psb30/Ycf12, at least 3 peripheral proteins of the oxygen-evolving complex and a large number of cofactors. It forms dimeric complexes.

It is found in the plastid. It localises to the chloroplast thylakoid membrane. In terms of biological role, one of the components of the core complex of photosystem II (PSII). PSII is a light-driven water:plastoquinone oxidoreductase that uses light energy to abstract electrons from H(2)O, generating O(2) and a proton gradient subsequently used for ATP formation. It consists of a core antenna complex that captures photons, and an electron transfer chain that converts photonic excitation into a charge separation. The chain is Photosystem II reaction center protein K from Sinapis alba (White mustard).